A 29-amino-acid chain; its full sequence is Frontoxin VI (29 aa).

The cysteines at positions 3 and 24 are disulfide-linked.

In terms of tissue distribution, expressed by the venom gland.

Its subcellular location is the secreted. Binds to muscle nicotinic acetylcholine receptor (nAChR) and inhibit acetylcholine from binding to the receptor, thereby impairing neuromuscular transmission. The polypeptide is Frontoxin VI (Micrurus frontalis (Coral snake)).